The sequence spans 311 residues: Mediator of RNA polymerase II transcription subunit 27 (311 aa).

Phosphoserine is present on Ser132. An N6-methyllysine modification is found at Lys134.

It belongs to the Mediator complex subunit 27 family. In terms of assembly, component of the Mediator complex, which is composed of MED1, MED4, MED6, MED7, MED8, MED9, MED10, MED11, MED12, MED13, MED13L, MED14, MED15, MED16, MED17, MED18, MED19, MED20, MED21, MED22, MED23, MED24, MED25, MED26, MED27, MED29, MED30, MED31, CCNC, CDK8 and CDC2L6/CDK11. The MED12, MED13, CCNC and CDK8 subunits form a distinct module termed the CDK8 module. Mediator containing the CDK8 module is less active than Mediator lacking this module in supporting transcriptional activation. Individual preparations of the Mediator complex lacking one or more distinct subunits have been variously termed ARC, CRSP, DRIP, PC2, SMCC and TRAP.

The protein localises to the nucleus. Functionally, component of the Mediator complex, a coactivator involved in the regulated transcription of nearly all RNA polymerase II-dependent genes. Mediator functions as a bridge to convey information from gene-specific regulatory proteins to the basal RNA polymerase II transcription machinery. Mediator is recruited to promoters by direct interactions with regulatory proteins and serves as a scaffold for the assembly of a functional preinitiation complex with RNA polymerase II and the general transcription factors. This is Mediator of RNA polymerase II transcription subunit 27 (MED27) from Sus scrofa (Pig).